Here is a 414-residue protein sequence, read N- to C-terminus: Mini-circle putative transposase for IS117 (414 aa).

The polypeptide is Mini-circle putative transposase for IS117 (Streptomyces coelicolor (strain ATCC BAA-471 / A3(2) / M145)).